Consider the following 595-residue polypeptide: Chaperone protein HscA homolog (595 aa).

This sequence belongs to the heat shock protein 70 family.

Chaperone involved in the maturation of iron-sulfur cluster-containing proteins. Has a low intrinsic ATPase activity which is markedly stimulated by HscB. In Rickettsia peacockii (strain Rustic), this protein is Chaperone protein HscA homolog.